The primary structure comprises 321 residues: N-acetyl-gamma-glutamyl-phosphate reductase (321 aa).

Residue C131 is part of the active site.

It belongs to the NAGSA dehydrogenase family. Type 1 subfamily.

It is found in the cytoplasm. It carries out the reaction N-acetyl-L-glutamate 5-semialdehyde + phosphate + NADP(+) = N-acetyl-L-glutamyl 5-phosphate + NADPH + H(+). Its pathway is amino-acid biosynthesis; L-arginine biosynthesis; N(2)-acetyl-L-ornithine from L-glutamate: step 3/4. Catalyzes the NADPH-dependent reduction of N-acetyl-5-glutamyl phosphate to yield N-acetyl-L-glutamate 5-semialdehyde. This chain is N-acetyl-gamma-glutamyl-phosphate reductase, found in Christiangramia forsetii (strain DSM 17595 / CGMCC 1.15422 / KT0803) (Gramella forsetii).